The following is a 415-amino-acid chain: Gamma-glutamyl phosphate reductase (415 aa).

Belongs to the gamma-glutamyl phosphate reductase family.

It localises to the cytoplasm. The enzyme catalyses L-glutamate 5-semialdehyde + phosphate + NADP(+) = L-glutamyl 5-phosphate + NADPH + H(+). It participates in amino-acid biosynthesis; L-proline biosynthesis; L-glutamate 5-semialdehyde from L-glutamate: step 2/2. Functionally, catalyzes the NADPH-dependent reduction of L-glutamate 5-phosphate into L-glutamate 5-semialdehyde and phosphate. The product spontaneously undergoes cyclization to form 1-pyrroline-5-carboxylate. The polypeptide is Gamma-glutamyl phosphate reductase (Bacillus cereus (strain ZK / E33L)).